Consider the following 109-residue polypeptide: uncharacterized protein (109 aa).

The helical transmembrane segment at 29–49 threads the bilayer; that stretch reads ITIIITLVIIFIIFTLIILYF.

The protein resides in the membrane. This is an uncharacterized protein from Sputnik virophage.